The chain runs to 386 residues: Peroxisomal membrane protein PEX13 (386 aa).

Residues M1–T76 are disordered. The Lumenal portion of the chain corresponds to M1–K263. Positions R23–S39 are enriched in polar residues. Residues E44 to A55 show a composition bias toward low complexity. The segment covering L65–T76 has biased composition (polar residues). A helical transmembrane segment spans residues P264–N280. Topologically, residues K281–H386 are cytoplasmic. Residues S306–R372 enclose the SH3 domain.

Belongs to the peroxin-13 family. Interacts (via SH3 domain) with PEX14 (via SH3-binding motif); forming the PEX13-PEX14 docking complex.

Its subcellular location is the peroxisome membrane. In terms of biological role, component of the PEX13-PEX14 docking complex, a translocon channel that specifically mediates the import of peroxisomal cargo proteins bound to PEX5 or PEX21 receptors. The PEX13-PEX14 docking complex forms a large import pore which can be opened to a diameter of about 9 nm. Mechanistically, PEX5 (or PEX21) receptor along with cargo proteins associates with the PEX14 subunit of the PEX13-PEX14 docking complex in the cytosol, leading to the insertion of the receptor into the organelle membrane with the concomitant translocation of the cargo into the peroxisome matrix. This Saccharomyces cerevisiae (strain ATCC 204508 / S288c) (Baker's yeast) protein is Peroxisomal membrane protein PEX13.